The sequence spans 1863 residues: Breast cancer type 1 susceptibility protein homolog (1863 aa).

Met1 carries the post-translational modification N-acetylmethionine. An RING-type zinc finger spans residues Cys24–Lys65. Residue Lys109 forms a Glycyl lysine isopeptide (Lys-Gly) (interchain with G-Cter in SUMO2) linkage. Ser114 is modified (phosphoserine). The tract at residues Glu230–Ser267 is disordered. Basic and acidic residues predominate over residues Thr248–Lys260. Lys301 participates in a covalent cross-link: Glycyl lysine isopeptide (Lys-Gly) (interchain with G-Cter in SUMO2). A disordered region spans residues Asn306–Lys338. Positions Thr327–Lys338 are enriched in basic and acidic residues. Lys339 participates in a covalent cross-link: Glycyl lysine isopeptide (Lys-Gly) (interchain with G-Cter in SUMO2). Ser395, Ser398, Ser423, and Ser434 each carry phosphoserine. Residues Lys443, Lys459, and Lys519 each participate in a glycyl lysine isopeptide (Lys-Gly) (interchain with G-Cter in SUMO2) cross-link. Residue Ser551 is modified to Phosphoserine. Glycyl lysine isopeptide (Lys-Gly) (interchain with G-Cter in SUMO2) cross-links involve residues Lys583 and Lys654. The disordered stretch occupies residues Ile650 to Lys739. 3 positions are modified to phosphoserine: Ser694, Ser708, and Ser725. The segment covering Ala705 to Ser716 has biased composition (polar residues). The segment covering Pro727 to Thr737 has biased composition (basic and acidic residues). Glycyl lysine isopeptide (Lys-Gly) (interchain with G-Cter in SUMO2) cross-links involve residues Lys734 and Lys739. 2 positions are modified to phosphoserine: Ser753 and Ser840. The tract at residues Ser896–Ser915 is disordered. Basic and acidic residues predominate over residues Thr900–Asn909. Residues Lys918 and Lys987 each participate in a glycyl lysine isopeptide (Lys-Gly) (interchain with G-Cter in SUMO2) cross-link. A Phosphoserine; by CHEK2 modification is found at Ser988. Ser1009 carries the phosphoserine modification. A Glycyl lysine isopeptide (Lys-Gly) (interchain with G-Cter in SUMO2) cross-link involves residue Lys1079. Phosphoserine occurs at positions 1143, 1189, 1191, 1211, 1217, 1218, 1280, 1328, 1336, 1342, and 1387. The tract at residues Val1181–Leu1216 is disordered. Residues Lys1322 to Gln1395 are disordered. A compositionally biased stretch (polar residues) spans Glu1373–Gln1395. Thr1394 bears the Phosphothreonine mark. The interaction with PALB2 stretch occupies residues Arg1397–Gln1424. Phosphoserine occurs at positions 1423, 1457, 1524, and 1542. Residues Glu1440 to Asp1505 form a disordered region. The span at Asn1444–Glu1470 shows a compositional bias: polar residues. The disordered stretch occupies residues Glu1565 to Ser1642. A compositionally biased stretch (polar residues) spans Ser1610–Gly1624. 2 BRCT domains span residues Ser1642–Val1736 and Gln1756–Ile1855.

As to quaternary structure, heterodimer with BARD1. Part of the BRCA1-associated genome surveillance complex (BASC), which contains BRCA1, MSH2, MSH6, MLH1, ATM, BLM, PMS2 and the MRE11-RAD50-NBN protein (MRN) complex. This association could be a dynamic process changing throughout the cell cycle and within subnuclear domains. Component of the BRCA1-A complex, at least composed of BRCA1, BARD1, UIMC1/RAP80, ABRAXAS1, BRCC3/BRCC36, BABAM2 and BABAM1/NBA1. Interacts (via the BRCT domains) with ABRAXAS1 (phosphorylated form); this is important for recruitment to sites of DNA damage. Can form a heterotetramer with two molecules of ABRAXAS1 (phosphorylated form). Component of the BRCA1-RBBP8 complex. Interacts (via the BRCT domains) with RBBP8 ('Ser-327' phosphorylated form); the interaction ubiquitinates RBBP8, regulates CHEK1 activation, and involves RBBP8 in BRCA1-dependent G2/M checkpoint control on DNA damage. Associates with RNA polymerase II holoenzyme. Interacts with SMC1A, NELFB, DCLRE1C, CLSPN. CHEK1, CHEK2, BAP1, BRCC3, UBXN1 and PCLAF. Interacts (via BRCT domains) with BRIP1 (phosphorylated form). Interacts with FANCD2 (ubiquitinated form). Interacts with H2AX (phosphorylated on 'Ser-140'). Interacts (via the BRCT domains) with ACACA (phosphorylated form); the interaction prevents dephosphorylation of ACACA. Part of a BRCA complex containing BRCA1, BRCA2 and PALB2. Interacts directly with PALB2; the interaction is essential for its function in HRR. Interacts directly with BRCA2; the interaction occurs only in the presence of PALB2 which serves as the bridging protein. Interacts (via the BRCT domains) with LMO4; the interaction represses the transcriptional activity of BRCA1. Interacts (via the BRCT domains) with CCAR2 (via N-terminus); the interaction represses the transcriptional activator activity of BRCA1. Interacts with EXD2. Interacts (via C-terminus) with DHX9; this interaction is direct and links BRCA1 to the RNA polymerase II holoenzyme. Interacts with DNA helicase ZGRF1; the interaction is increased following DNA damage induction. Post-translationally, phosphorylated in response to IR, UV, and various stimuli that cause checkpoint activation, probably by ATM or ATR. Phosphorylation at Ser-988 by CHEK2 regulates mitotic spindle assembly. Phosphorylation by AURKA regulates centrosomal microtubule nucleation. In terms of processing, autoubiquitinated, undergoes 'Lys-6'-linked polyubiquitination. 'Lys-6'-linked polyubiquitination does not promote degradation.

It is found in the nucleus. It localises to the chromosome. Its subcellular location is the cytoplasm. It carries out the reaction S-ubiquitinyl-[E2 ubiquitin-conjugating enzyme]-L-cysteine + [acceptor protein]-L-lysine = [E2 ubiquitin-conjugating enzyme]-L-cysteine + N(6)-ubiquitinyl-[acceptor protein]-L-lysine.. E3 ubiquitin-protein ligase that specifically mediates the formation of 'Lys-6'-linked polyubiquitin chains and plays a central role in DNA repair by facilitating cellular responses to DNA damage. It is unclear whether it also mediates the formation of other types of polyubiquitin chains. The BRCA1-BARD1 heterodimer coordinates a diverse range of cellular pathways such as DNA damage repair, ubiquitination and transcriptional regulation to maintain genomic stability. Regulates centrosomal microtubule nucleation. Required for appropriate cell cycle arrests after ionizing irradiation in both the S-phase and the G2 phase of the cell cycle. Required for FANCD2 targeting to sites of DNA damage. Inhibits lipid synthesis by binding to inactive phosphorylated ACACA and preventing its dephosphorylation. Contributes to homologous recombination repair (HRR) via its direct interaction with PALB2, fine-tunes recombinational repair partly through its modulatory role in the PALB2-dependent loading of BRCA2-RAD51 repair machinery at DNA breaks. Component of the BRCA1-RBBP8 complex which regulates CHEK1 activation and controls cell cycle G2/M checkpoints on DNA damage via BRCA1-mediated ubiquitination of RBBP8. Acts as a transcriptional activator. The polypeptide is Breast cancer type 1 susceptibility protein homolog (BRCA1) (Pan troglodytes (Chimpanzee)).